A 391-amino-acid polypeptide reads, in one-letter code: Succinyl-diaminopimelate desuccinylase (391 aa).

Zn(2+) is bound at residue His-74. Residue Asp-76 is part of the active site. Position 107 (Asp-107) interacts with Zn(2+). Glu-141 acts as the Proton acceptor in catalysis. Glu-142, Glu-170, and His-360 together coordinate Zn(2+).

The protein belongs to the peptidase M20A family. DapE subfamily. As to quaternary structure, homodimer. Requires Zn(2+) as cofactor. Co(2+) is required as a cofactor.

It catalyses the reaction N-succinyl-(2S,6S)-2,6-diaminopimelate + H2O = (2S,6S)-2,6-diaminopimelate + succinate. It participates in amino-acid biosynthesis; L-lysine biosynthesis via DAP pathway; LL-2,6-diaminopimelate from (S)-tetrahydrodipicolinate (succinylase route): step 3/3. Its function is as follows. Catalyzes the hydrolysis of N-succinyl-L,L-diaminopimelic acid (SDAP), forming succinate and LL-2,6-diaminopimelate (DAP), an intermediate involved in the bacterial biosynthesis of lysine and meso-diaminopimelic acid, an essential component of bacterial cell walls. The polypeptide is Succinyl-diaminopimelate desuccinylase (Variovorax paradoxus (strain S110)).